We begin with the raw amino-acid sequence, 528 residues long: Serine/threonine-protein kinase akt-2 (528 aa).

In terms of domain architecture, PH spans 12–115; it reads DIVIESWLHK…WIEAIQAVSS (104 aa). The segment at 121–153 is disordered; the sequence is ENAGNTSMQEEDTNGNPSGESDVNMDATSTRSD. Positions 123–153 are enriched in polar residues; that stretch reads AGNTSMQEEDTNGNPSGESDVNMDATSTRSD. One can recognise a Protein kinase domain in the interval 180 to 437; sequence FDFLKVLGQG…AREVSRAEFF (258 aa). Residues 186–194 and Lys209 contribute to the ATP site; that span reads LGQGTFGKV. Residue Asp303 is the Proton acceptor of the active site. The AGC-kinase C-terminal domain occupies 438–515; that stretch reads KDVDWEATLR…YYVSGSLERS (78 aa).

The protein belongs to the protein kinase superfamily. AGC Ser/Thr protein kinase family. RAC subfamily. As to quaternary structure, interacts with pdk-1, sgk-1, akt-1 and daf-16. Part of a complex containing sgk-1, akt-1 and akt-2. Mg(2+) is required as a cofactor. Expressed in neurons, muscle cells of the pharynx, rectal gland cells, and spermatheca.

It catalyses the reaction L-seryl-[protein] + ATP = O-phospho-L-seryl-[protein] + ADP + H(+). The catalysed reaction is L-threonyl-[protein] + ATP = O-phospho-L-threonyl-[protein] + ADP + H(+). Its activity is regulated as follows. Phosphorylated and activated by pdk-1. Its function is as follows. Acts downstream of PI3 kinase age-1 and kinase pdk-1 in the daf-2/insulin receptor-like transduction pathway. Essential role in regulating developmental arrest at the dauer stage. Phosphorylates Forkhead-related daf-16 and the longevity-promoting skn-1 transcription factors, which inhibits their entry into the nucleus and antagonizes their functions. Role in immune function and pathogen resistance. Downstream of age-1 and together with akt-1 and sgk-1, promotes cell survival during embryonic development. Plays a role in maintaining the gonadal basement membrane through antagonizing akt-1 activity. This Caenorhabditis elegans protein is Serine/threonine-protein kinase akt-2.